Here is a 234-residue protein sequence, read N- to C-terminus: Small ribosomal subunit protein uS2c (234 aa).

Belongs to the universal ribosomal protein uS2 family.

The protein resides in the plastid. It is found in the chloroplast. The chain is Small ribosomal subunit protein uS2c (rps2) from Pinus koraiensis (Korean pine).